The sequence spans 564 residues: Sphingomyelin phosphodiesterase 1 (564 aa).

Positions 1–17 (MRIIYLISTVLLIYTNA) are cleaved as a signal peptide. One can recognise a Saposin B-type domain in the interval 37 to 121 (FQPLCISCTG…IILPDCADPT (85 aa)). Disulfide bonds link Cys-41/Cys-117, Cys-44/Cys-110, and Cys-72/Cys-83. Asn-151 carries N-linked (GlcNAc...) asparagine glycosylation. Asp-165 and His-167 together coordinate Zn(2+). Cystine bridges form between Cys-180–Cys-185 and Cys-186–Cys-206. Asn-221 carries an N-linked (GlcNAc...) asparagine glycan. Zn(2+) contacts are provided by Asp-234 and Asn-274. Cys-341 and Cys-389 form a disulfide bridge. An N-linked (GlcNAc...) asparagine glycan is attached at Asn-351. Zn(2+) contacts are provided by His-381, His-415, and His-417. Asn-430 is a glycosylation site (N-linked (GlcNAc...) asparagine). 2 disulfides stabilise this stretch: Cys-538–Cys-542 and Cys-548–Cys-561. N-linked (GlcNAc...) asparagine glycosylation is present at Asn-556.

This sequence belongs to the acid sphingomyelinase family. Zn(2+) serves as cofactor.

Its subcellular location is the secreted. It carries out the reaction a sphingomyelin + H2O = phosphocholine + an N-acylsphing-4-enine + H(+). It catalyses the reaction an N-acyl-15-methylhexadecasphing-4-enine-1-phosphocholine + H2O = an N-acyl-15-methylhexadecasphing-4-enine + phosphocholine + H(+). Its pathway is lipid metabolism; sphingolipid metabolism. In terms of biological role, sphingomyelin phosphodiesterase (sphingomyelinase) that converts sphingomyelin to ceramide (N-acyl-sphingoid base) and phosphocholine at acidic pH. Displays its enzymatic activity when secreted. May play distinct roles in signaling. The polypeptide is Sphingomyelin phosphodiesterase 1 (asm-1) (Caenorhabditis elegans).